The sequence spans 205 residues: Small ribosomal subunit protein uS4 (205 aa).

The segment at 1–44 (MSKRHSQKYKIDRRMGENLWGRPKSPVNSRSYGPGQHGQRRKTK) is disordered. In terms of domain architecture, S4 RNA-binding spans 94-173 (SRLDAIVYRC…LPEYIDLDAK (80 aa)).

This sequence belongs to the universal ribosomal protein uS4 family. Part of the 30S ribosomal subunit. Contacts protein S5. The interaction surface between S4 and S5 is involved in control of translational fidelity.

Functionally, one of the primary rRNA binding proteins, it binds directly to 16S rRNA where it nucleates assembly of the body of the 30S subunit. Its function is as follows. With S5 and S12 plays an important role in translational accuracy. This is Small ribosomal subunit protein uS4 from Maricaulis maris (strain MCS10) (Caulobacter maris).